Here is a 522-residue protein sequence, read N- to C-terminus: tRNA-2-methylthio-N(6)-dimethylallyladenosine synthase (522 aa).

The MTTase N-terminal domain occupies 24-140; that stretch reads RTYEVKTYGC…LPTLLQRAEH (117 aa). 6 residues coordinate [4Fe-4S] cluster: C33, C69, C103, C177, C181, and C184. One can recognise a Radical SAM core domain in the interval 163 to 399; it reads RESAYAGWVS…MVVQEQVCEE (237 aa). Residues 402–473 enclose the TRAM domain; it reads QKLIGTTVEL…PFFLIADSGV (72 aa).

This sequence belongs to the methylthiotransferase family. MiaB subfamily. Monomer. [4Fe-4S] cluster is required as a cofactor.

The protein localises to the cytoplasm. The enzyme catalyses N(6)-dimethylallyladenosine(37) in tRNA + (sulfur carrier)-SH + AH2 + 2 S-adenosyl-L-methionine = 2-methylsulfanyl-N(6)-dimethylallyladenosine(37) in tRNA + (sulfur carrier)-H + 5'-deoxyadenosine + L-methionine + A + S-adenosyl-L-homocysteine + 2 H(+). Its function is as follows. Catalyzes the methylthiolation of N6-(dimethylallyl)adenosine (i(6)A), leading to the formation of 2-methylthio-N6-(dimethylallyl)adenosine (ms(2)i(6)A) at position 37 in tRNAs that read codons beginning with uridine. The sequence is that of tRNA-2-methylthio-N(6)-dimethylallyladenosine synthase from Corynebacterium glutamicum (strain ATCC 13032 / DSM 20300 / JCM 1318 / BCRC 11384 / CCUG 27702 / LMG 3730 / NBRC 12168 / NCIMB 10025 / NRRL B-2784 / 534).